Reading from the N-terminus, the 308-residue chain is Maspardin (308 aa).

The AB hydrolase-1 domain maps to 87 to 159 (FCDGFRKLLD…NSFWLMPAFM (73 aa)). Serine 304 bears the Phosphoserine mark.

It belongs to the AB hydrolase superfamily. Interacts with CD4. Interacts with ALDH16A1. In terms of tissue distribution, expressed in cell lines FT.1 and in a L cell fibroblast derivative (at protein level).

Its subcellular location is the cytoplasm. May play a role as a negative regulatory factor in CD4-dependent T-cell activation. This is Maspardin (Spg21) from Mus musculus (Mouse).